The sequence spans 487 residues: L-carnitine dehydrogenase/betainyl-CoA thioesterase (487 aa).

The interval 1 to 327 (MTTAAIIGGG…DAALKPKALP (327 aa)) is L-carnitine dehydrogenase. Position 8–13 (8–13 (GGGVIG)) interacts with NAD(+). The betainyl-CoA thioesterase stretch occupies residues 328–487 (DLDTADLTQP…GAGSAIRKPA (160 aa)).

This sequence in the N-terminal section; belongs to the 3-hydroxyacyl-CoA dehydrogenase family. L-carnitine dehydrogenase subfamily. The protein in the C-terminal section; belongs to the betainyl-CoA thioesterase family. Homodimer.

It localises to the cytoplasm. It catalyses the reaction carnitine + NAD(+) = 3-dehydrocarnitine + NADH + H(+). The enzyme catalyses N,N,N-trimethylglycyl-CoA + H2O = glycine betaine + CoA + H(+). Its pathway is amine and polyamine metabolism; carnitine metabolism. In terms of biological role, multifunctional enzyme that catalyzes the NAD(+)-dependent oxidation of L-carnitine to 3-dehydrocarnitine and the cleavage of betainyl-CoA (N,N,N-trimethylglycyl-CoA) into glycine betaine and coenzyme A. In Ruegeria pomeroyi (strain ATCC 700808 / DSM 15171 / DSS-3) (Silicibacter pomeroyi), this protein is L-carnitine dehydrogenase/betainyl-CoA thioesterase.